A 444-amino-acid polypeptide reads, in one-letter code: Docking protein 3 (444 aa).

The PH domain occupies 7–123; it reads PVKDGILYQQ…WVDPICQLAF (117 aa). Ser138 is modified (phosphoserine). The IRS-type PTB domain occupies 157-261; it reads EVTEFPVIVQ…ARQRERLPEL (105 aa). Ser274 carries the phosphoserine modification. Residues 278-299 form a disordered region; the sequence is LEPPGELREVAPGFELPTPRKL. A phosphoserine mark is found at Ser308 and Ser314. Tyr325 bears the Phosphotyrosine mark. Residues 354-390 are disordered; that stretch reads GLTNGGPEAQEGPPGGRSPLGSPIYHNTEDLSWPGSA. Positions 358 to 376 are enriched in low complexity; that stretch reads GGPEAQEGPPGGRSPLGSP. Position 371 is a phosphoserine (Ser371).

It belongs to the DOK family. Type A subfamily. As to quaternary structure, on tyrosine phosphorylation, interacts with CSK and INPP5D/SHIP1 via their SH2 domains. Both Tyr-325 and Tyr-343 are required for interaction with INPP5D. Only Tyr-325 is required for interaction with CSK. Binds ABL1 through the PTB domain and in a kinase-dependent manner. Does not interact with RasGAP. Constitutively tyrosine-phosphorylated. Post-translationally, on IL2 stimulation, phosphorylated on C-terminal tyrosine residues possibly by Src kinases. Can also be phosphorylated by ABL1 kinase. As to expression, predominantly expressed in bone marrow, spleen and lung. Low levels in heart, brain, liver, muscle, thymus, kidney and testis. Highly expressed in B-cells and macrophages.

It localises to the cytoplasm. It is found in the cell membrane. Its function is as follows. DOK proteins are enzymatically inert adaptor or scaffolding proteins. They provide a docking platform for the assembly of multimolecular signaling complexes. DOK3 is a negative regulator of JNK signaling in B-cells through interaction with INPP5D/SHIP1. May modulate ABL1 function. The polypeptide is Docking protein 3 (Dok3) (Mus musculus (Mouse)).